A 132-amino-acid polypeptide reads, in one-letter code: D-ribose pyranase (132 aa).

His-20 serves as the catalytic Proton donor. Substrate is bound by residues Asp-28, His-99, and 121–123 (YSN).

It belongs to the RbsD / FucU family. RbsD subfamily. As to quaternary structure, homodecamer.

The protein localises to the cytoplasm. It carries out the reaction beta-D-ribopyranose = beta-D-ribofuranose. It functions in the pathway carbohydrate metabolism; D-ribose degradation; D-ribose 5-phosphate from beta-D-ribopyranose: step 1/2. Its function is as follows. Catalyzes the interconversion of beta-pyran and beta-furan forms of D-ribose. The polypeptide is D-ribose pyranase (Pseudomonas putida (strain W619)).